The following is a 404-amino-acid chain: Histidine--tRNA ligase (404 aa).

This sequence belongs to the class-II aminoacyl-tRNA synthetase family.

The protein resides in the cytoplasm. The enzyme catalyses tRNA(His) + L-histidine + ATP = L-histidyl-tRNA(His) + AMP + diphosphate + H(+). This is Histidine--tRNA ligase from Nanoarchaeum equitans (strain Kin4-M).